Consider the following 408-residue polypeptide: Lipoate--protein ligase 1 (408 aa).

The transit peptide at 1–18 (MKRIFRLVRRCHYSTEKR) directs the protein to the mitochondrion. A BPL/LPL catalytic domain is found at 60–242 (KFNEPILFLW…EFTKFYEQNY (183 aa)). Residues arginine 102, glycine 107, and tyrosine 110 each coordinate ATP. Residue glycine 107 coordinates (R)-lipoate. Aspartate 153 serves as a coordination point for Mg(2+). Lysine 160 contributes to the ATP binding site. Lysine 160 is a binding site for (R)-lipoate.

Belongs to the LplA family.

The protein resides in the mitochondrion. It catalyses the reaction L-lysyl-[lipoyl-carrier protein] + (R)-lipoate + ATP = N(6)-[(R)-lipoyl]-L-lysyl-[lipoyl-carrier protein] + AMP + diphosphate + H(+). The catalysed reaction is (R)-dihydrolipoate + L-lysyl-[lipoyl-carrier protein] + ATP = N(6)-[(R)-dihydrolipoyl]-L-lysyl-[lipoyl-carrier protein] + AMP + diphosphate + H(+). The enzyme catalyses (R)-dihydrolipoate + ATP + H(+) = N(6)-[(R)-dihydrolipoyl]-5'-AMP + diphosphate. It carries out the reaction N(6)-[(R)-dihydrolipoyl]-5'-AMP + L-lysyl-[lipoyl-carrier protein] = N(6)-[(R)-dihydrolipoyl]-L-lysyl-[lipoyl-carrier protein] + AMP + 2 H(+). Its pathway is protein modification; protein lipoylation via exogenous pathway; protein N(6)-(lipoyl)lysine from lipoate: step 1/2. It functions in the pathway protein modification; protein lipoylation via exogenous pathway; protein N(6)-(lipoyl)lysine from lipoate: step 2/2. Its activity is regulated as follows. Inhibited by the lipoate analog 8-bromo-octanoate (BrO). Catalytic activity is increased in the presence of Mg(2+). Functionally, catalyzes both the ATP-dependent activation of exogenously supplied lipoate to lipoyl-AMP and the transfer of the activated lipoyl onto the lipoyl domains of lipoate-dependent enzymes. In the mitochondrion, functions as a redox switch between two lipoylation routes. Senses the oxidation state of lipoate and determines which downstream enzymes will be lipoylated. In low reducing conditions, uses lipoate in its oxidized ring form to lipoylate glycine cleavage system H-protein GCVH. In high reducing conditions and together with LipL2, uses reduced lipoate (dihydrolipoate) to lipoylate the E2 component of the branched chain alpha-ketoacid dehydrogenase complex BCKDH-E2/BCDH and the E2 component of the alpha-ketoglutarate dehydrogenase complex KDH. LipL1 is responsible for catalysing the activation of lipoate, forming lipoyl-AMP while LipL2 is required but is not capable of catalyzing this reaction. The polypeptide is Lipoate--protein ligase 1 (Plasmodium falciparum (isolate 3D7)).